The primary structure comprises 110 residues: uncharacterized protein (110 aa).

The protein to M.jannaschii MJ0123 and MJ1213.

This is an uncharacterized protein from Aquifex aeolicus (strain VF5).